The chain runs to 599 residues: Elongation factor 4 (599 aa).

The region spanning 2–184 is the tr-type G domain; the sequence is NHIRNFSIIA…RLVRDIPAPE (183 aa). GTP is bound by residues 14 to 19 and 131 to 134; these read DHGKST and NKID.

It belongs to the TRAFAC class translation factor GTPase superfamily. Classic translation factor GTPase family. LepA subfamily.

It localises to the cell inner membrane. The enzyme catalyses GTP + H2O = GDP + phosphate + H(+). Functionally, required for accurate and efficient protein synthesis under certain stress conditions. May act as a fidelity factor of the translation reaction, by catalyzing a one-codon backward translocation of tRNAs on improperly translocated ribosomes. Back-translocation proceeds from a post-translocation (POST) complex to a pre-translocation (PRE) complex, thus giving elongation factor G a second chance to translocate the tRNAs correctly. Binds to ribosomes in a GTP-dependent manner. This is Elongation factor 4 from Yersinia pestis (strain Pestoides F).